Here is a 125-residue protein sequence, read N- to C-terminus: Small ribosomal subunit protein uS12 (125 aa).

Asp-89 carries the post-translational modification 3-methylthioaspartic acid.

It belongs to the universal ribosomal protein uS12 family. As to quaternary structure, part of the 30S ribosomal subunit. Contacts proteins S8 and S17. May interact with IF1 in the 30S initiation complex.

Functionally, with S4 and S5 plays an important role in translational accuracy. Its function is as follows. Interacts with and stabilizes bases of the 16S rRNA that are involved in tRNA selection in the A site and with the mRNA backbone. Located at the interface of the 30S and 50S subunits, it traverses the body of the 30S subunit contacting proteins on the other side and probably holding the rRNA structure together. The combined cluster of proteins S8, S12 and S17 appears to hold together the shoulder and platform of the 30S subunit. The polypeptide is Small ribosomal subunit protein uS12 (Bordetella avium (strain 197N)).